The primary structure comprises 108 residues: DNA-binding protein HBbu (108 aa).

The protein belongs to the bacterial histone-like protein family.

Histone-like DNA-binding protein which is capable of wrapping DNA to stabilize it, and thus to prevent its denaturation under extreme environmental conditions. The chain is DNA-binding protein HBbu (hbb) from Borrelia garinii subsp. bavariensis (strain ATCC BAA-2496 / DSM 23469 / PBi) (Borreliella bavariensis).